A 145-amino-acid chain; its full sequence is D-aminoacyl-tRNA deacylase (145 aa).

The short motif at 137 to 138 (GP) is the Gly-cisPro motif, important for rejection of L-amino acids element.

It belongs to the DTD family. Homodimer.

It is found in the cytoplasm. The catalysed reaction is glycyl-tRNA(Ala) + H2O = tRNA(Ala) + glycine + H(+). It carries out the reaction a D-aminoacyl-tRNA + H2O = a tRNA + a D-alpha-amino acid + H(+). Functionally, an aminoacyl-tRNA editing enzyme that deacylates mischarged D-aminoacyl-tRNAs. Also deacylates mischarged glycyl-tRNA(Ala), protecting cells against glycine mischarging by AlaRS. Acts via tRNA-based rather than protein-based catalysis; rejects L-amino acids rather than detecting D-amino acids in the active site. By recycling D-aminoacyl-tRNA to D-amino acids and free tRNA molecules, this enzyme counteracts the toxicity associated with the formation of D-aminoacyl-tRNA entities in vivo and helps enforce protein L-homochirality. This is D-aminoacyl-tRNA deacylase from Shewanella pealeana (strain ATCC 700345 / ANG-SQ1).